The following is a 241-amino-acid chain: Sugar fermentation stimulation protein homolog (241 aa).

The protein belongs to the SfsA family.

This Nostoc punctiforme (strain ATCC 29133 / PCC 73102) protein is Sugar fermentation stimulation protein homolog.